The following is a 285-amino-acid chain: Probable fructose-bisphosphate aldolase (285 aa).

Ser50 serves as a coordination point for D-glyceraldehyde 3-phosphate. Residue Asp85 is the Proton donor of the active site. Positions 86, 107, 137, and 181 each coordinate Zn(2+). Dihydroxyacetone phosphate is bound at residue Gly182. Position 209 (His209) interacts with Zn(2+). Residues 210 to 212 (GGT) and 231 to 234 (NVNT) each bind dihydroxyacetone phosphate. 2 positions are modified to phosphothreonine: Thr212 and Thr234.

It belongs to the class II fructose-bisphosphate aldolase family. Requires Zn(2+) as cofactor. In terms of processing, phosphorylated during sporulation.

The catalysed reaction is beta-D-fructose 1,6-bisphosphate = D-glyceraldehyde 3-phosphate + dihydroxyacetone phosphate. The protein operates within carbohydrate degradation; glycolysis; D-glyceraldehyde 3-phosphate and glycerone phosphate from D-glucose: step 4/4. Its function is as follows. Catalyzes the aldol condensation of dihydroxyacetone phosphate (DHAP or glycerone-phosphate) with glyceraldehyde 3-phosphate (G3P) to form fructose 1,6-bisphosphate (FBP) in gluconeogenesis and the reverse reaction in glycolysis. The polypeptide is Probable fructose-bisphosphate aldolase (fbaA) (Bacillus subtilis (strain 168)).